The sequence spans 271 residues: OX-2 membrane glycoprotein homolog (271 aa).

An N-terminal signal peptide occupies residues Met1 to Gly24. Over Ala25–Ala227 the chain is Extracellular. An Ig-like V-type domain is found at Arg26 to Ser129. A disulfide bridge connects residues Cys39 and Cys109. N-linked (GlcNAc...) asparagine; by host glycosylation is found at Asn83, Asn91, Asn138, Asn157, Asn166, and Asn208. Residues Pro130–Pro220 form the Ig-like C2-type domain. Cys148 and Cys202 are joined by a disulfide. A helical membrane pass occupies residues Ala228–Leu248. Topologically, residues His249–Gln271 are cytoplasmic.

In terms of assembly, interacts with human CD200R1. In terms of processing, N-glycosylated.

It localises to the host cell membrane. Functionally, dramatically stimulates primary monocytes, macrophages, and dendritic cells to produce the inflammatory cytokines interleukin 1-beta, IL-6, monocyte chemoattractant protein 1, and TNF-alpha. The induction of inflammatory cytokine production potentially promotes the cytokine-mediated angiogenic proliferation of KSHV-infected cells. This Human herpesvirus 8 type P (isolate GK18) (HHV-8) protein is OX-2 membrane glycoprotein homolog (K14).